Reading from the N-terminus, the 407-residue chain is E3 ubiquitin-protein ligase TRIM13 (407 aa).

An RING-type zinc finger spans residues 10–58 (CPICCSLFDDPRVLPCSHNFCKKCLEGILEGNVRNSLWRSSPFKCPTCR). Residues 89-131 (PKMPVCKGHLGQPLNIFCLTDMQLICGICATRGEHTKHVFCSI) form a B box-type zinc finger. The Zn(2+) site is built by cysteine 94, histidine 97, cysteine 117, and histidine 123. Residues 172-200 (LQLLTKDSDKVKEFFEKLQYTLDQKKNEI) are a coiled coil. The chain crosses the membrane as a helical span at residues 316–336 (PLFVVVILLGLLIFFSPTMFL).

As to quaternary structure, interacts (via C-terminal domain) with VCP. Interacts with AKT1; the interaction ubiquitinates AKT1 and leads to its proteasomal degradation. Interacts with MDM2; the interaction ubiquitinates AKT1 and leads to its proteasomal degradation. Interacts with p62/SQSTM1. Interacts with TRAF6. Interacts with IKBKG/NEMO. In terms of processing, auto-ubiquitinated; requires the RING-type zinc finger. Auto-polyubiquitination leads to proteasomal degradation.

Its subcellular location is the endoplasmic reticulum membrane. It carries out the reaction S-ubiquitinyl-[E2 ubiquitin-conjugating enzyme]-L-cysteine + [acceptor protein]-L-lysine = [E2 ubiquitin-conjugating enzyme]-L-cysteine + N(6)-ubiquitinyl-[acceptor protein]-L-lysine.. The protein operates within protein modification; protein ubiquitination. In terms of biological role, endoplasmic reticulum (ER) membrane anchored E3 ligase involved in the retrotranslocation and turnover of membrane and secretory proteins from the ER through a set of processes named ER-associated degradation (ERAD). This process acts on misfolded proteins as well as in the regulated degradation of correctly folded proteins. Enhances ionizing radiation-induced p53/TP53 stability and apoptosis via ubiquitinating MDM2 and AKT1 and decreasing AKT1 kinase activity through MDM2 and AKT1 proteasomal degradation. Regulates ER stress-induced autophagy, and may act as a tumor suppressor. Also plays a role in innate immune response by stimulating NF-kappa-B activity in the TLR2 signaling pathway. Ubiquitinates TRAF6 via the 'Lys-29'-linked polyubiquitination chain resulting in NF-kappa-B activation. Participates as well in T-cell receptor-mediated NF-kappa-B activation. In the presence of TNF, modulates the IKK complex by regulating IKBKG/NEMO ubiquitination leading to the repression of NF-kappa-B. The protein is E3 ubiquitin-protein ligase TRIM13 (TRIM13) of Bos taurus (Bovine).